The sequence spans 129 residues: MLPLSLLKTAQGHPMLVELKNGETYNGHLVNCDTWMNIHLREVICTSKDGDRFWRMPECYIRGNTIKYLRVPDEVIDKVQEEKTRTDRKPPGVGRGRGRGVDDGGARGRGRGTSMGKMGGNRGAGRGRG.

Positions 2–75 constitute a Sm domain; it reads LPLSLLKTAQ…IKYLRVPDEV (74 aa). Over residues 79 to 90 the composition is skewed to basic and acidic residues; the sequence is VQEEKTRTDRKP. A disordered region spans residues 79-129; the sequence is VQEEKTRTDRKPPGVGRGRGRGVDDGGARGRGRGTSMGKMGGNRGAGRGRG. A compositionally biased stretch (gly residues) spans 111 to 129; the sequence is RGTSMGKMGGNRGAGRGRG.

Belongs to the snRNP Sm proteins family. In terms of assembly, component of the heptameric LSM1-LSM7 complex that forms a seven-membered ring structure with a donut shape. The LSM subunits are arranged in the order LSM1, LSM2, LSM3, LSM6, LSM5, LSM7 and LSM4. LSM4 subunit interacts only with its two neighboring subunits, LSM1A or LSM1B and LSM7. Component of the heptameric LSM2-LSM8 complex that forms a seven-membered ring structure with a donut shape. The LSM subunits are arranged in the order LSM8, LSM2, LSM3, LSM6, LSM5, LSM7 and LSM4. LSM4 subunit interacts only with its two neighboring subunits, LSM8 and LSM7. Methylated by PMRT15/SKB1 in response to salt stress or abscisic acid (ABA) treatment. As to expression, expressed in roots, leaves, stems, flowers and siliques.

Its subcellular location is the cytoplasm. It is found in the nucleus. Functionally, component of LSM protein complexes, which are involved in RNA processing. Component of the cytoplasmic LSM1-LSM7 complex which is involved in mRNA degradation by promoting decapping and leading to accurate 5'-3' mRNA decay. The cytoplasmic LSM1-LSM7 complex regulates developmental gene expression by the decapping of specific development-related transcripts. Component of the nuclear LSM2-LSM8 complex which is involved splicing nuclear mRNAs. LSM2-LSM8 binds directly to the U6 small nuclear RNAs (snRNAs) and is essential for accurate splicing of selected development-related mRNAs through the stabilization of the spliceosomal U6 snRNA. Plays a critical role in the regulation of development-related gene expression. This is Sm-like protein LSM4 from Arabidopsis thaliana (Mouse-ear cress).